Reading from the N-terminus, the 193-residue chain is E3 ubiquitin-protein ligase RMA2 (193 aa).

Residues 21 to 75 (CNICLDQVRDPVVTLCGHLFCWPCIHKWTYASNNSRQRVDQYDHKREPPKCPVCK) form an RING-type zinc finger. Residues 175–192 (LSRVYLFLLCFMFMCLFL) form a helical; Anchor for type IV membrane protein membrane-spanning segment.

Interacts with ERABP1. Barely detected in roots and limited to the root tips. Expressed in leaf hydathodes and in siliques.

It is found in the endoplasmic reticulum membrane. The enzyme catalyses S-ubiquitinyl-[E2 ubiquitin-conjugating enzyme]-L-cysteine + [acceptor protein]-L-lysine = [E2 ubiquitin-conjugating enzyme]-L-cysteine + N(6)-ubiquitinyl-[acceptor protein]-L-lysine.. The protein operates within protein modification; protein ubiquitination. E3 ubiquitin-protein ligase that promotes the ubiquitination and proteasomal degradation of the auxin-binding protein ERABP1. The sequence is that of E3 ubiquitin-protein ligase RMA2 (RMA2) from Arabidopsis thaliana (Mouse-ear cress).